The primary structure comprises 149 residues: Large ribosomal subunit protein bL9 (149 aa).

This sequence belongs to the bacterial ribosomal protein bL9 family.

Functionally, binds to the 23S rRNA. The polypeptide is Large ribosomal subunit protein bL9 (Anaeromyxobacter dehalogenans (strain 2CP-1 / ATCC BAA-258)).